The primary structure comprises 375 residues: Growth/differentiation factor 8 (375 aa).

A signal peptide spans 1–18; the sequence is MQKLQIFVYIYLFMLLVA. A propeptide spanning residues 19–266 is cleaved from the precursor; that stretch reads GPVDLNENSE…VTDTPKRSRR (248 aa). N-linked (GlcNAc...) asparagine glycosylation is found at Asn-48 and Asn-71. Cystine bridges form between Cys-272–Cys-282, Cys-281–Cys-340, Cys-309–Cys-372, and Cys-313–Cys-374.

This sequence belongs to the TGF-beta family. As to quaternary structure, homodimer; disulfide-linked. Interacts with WFIKKN2, leading to inhibit its activity. Interacts with FSTL3. Post-translationally, synthesized as large precursor molecule that undergoes proteolytic cleavage to generate an N-terminal propeptide and a disulfide linked C-terminal dimer, which is the biologically active molecule. The circulating form consists of a latent complex of the C-terminal dimer and other proteins, including its propeptide, which maintain the C-terminal dimer in a latent, inactive state. Ligand activation requires additional cleavage of the prodomain by a tolloid-like metalloproteinase.

The protein resides in the secreted. Its function is as follows. Acts specifically as a negative regulator of skeletal muscle growth. This is Growth/differentiation factor 8 (MSTN) from Capra ibex (Ibex).